The following is a 293-amino-acid chain: Acetyl-coenzyme A carboxylase carboxyl transferase subunit beta (293 aa).

The region spanning 29-293 (LWVKCPECGQ…GCKAKKAAGK (265 aa)) is the CoA carboxyltransferase N-terminal domain. Positions 33, 36, 52, and 55 each coordinate Zn(2+). The C4-type zinc finger occupies 33–55 (CPECGQVVYRKDLHANASVCSNC).

Belongs to the AccD/PCCB family. Acetyl-CoA carboxylase is a heterohexamer composed of biotin carboxyl carrier protein (AccB), biotin carboxylase (AccC) and two subunits each of ACCase subunit alpha (AccA) and ACCase subunit beta (AccD). Requires Zn(2+) as cofactor.

The protein localises to the cytoplasm. The catalysed reaction is N(6)-carboxybiotinyl-L-lysyl-[protein] + acetyl-CoA = N(6)-biotinyl-L-lysyl-[protein] + malonyl-CoA. It participates in lipid metabolism; malonyl-CoA biosynthesis; malonyl-CoA from acetyl-CoA: step 1/1. Component of the acetyl coenzyme A carboxylase (ACC) complex. Biotin carboxylase (BC) catalyzes the carboxylation of biotin on its carrier protein (BCCP) and then the CO(2) group is transferred by the transcarboxylase to acetyl-CoA to form malonyl-CoA. The chain is Acetyl-coenzyme A carboxylase carboxyl transferase subunit beta from Prochlorococcus marinus (strain MIT 9303).